We begin with the raw amino-acid sequence, 269 residues long: WW domain-binding protein 1 (269 aa).

2 short sequence motifs (PPxY motif) span residues 124–127 (PPAY) and 137–141 (PPPPY). Disordered stretches follow at residues 169–203 (EGTN…PPSC) and 249–269 (PPES…GDIP). A compositionally biased stretch (polar residues) spans 174 to 183 (EGVSSHQSAP).

As to quaternary structure, interacts with NEDD4. Binds to the WW domain of YAP1, WWP1 and WWP2. Interacts with WWOX. As to expression, expressed in most tissues but at significantly lower levels in placenta, lung, liver, and kidney.

The sequence is that of WW domain-binding protein 1 (WBP1) from Homo sapiens (Human).